The chain runs to 187 residues: Hypoxanthine/guanine phosphoribosyltransferase (187 aa).

This sequence belongs to the purine/pyrimidine phosphoribosyltransferase family. Archaeal HPRT subfamily. In terms of assembly, homodimer.

The protein localises to the cytoplasm. It carries out the reaction IMP + diphosphate = hypoxanthine + 5-phospho-alpha-D-ribose 1-diphosphate. It catalyses the reaction GMP + diphosphate = guanine + 5-phospho-alpha-D-ribose 1-diphosphate. It participates in purine metabolism; IMP biosynthesis via salvage pathway; IMP from hypoxanthine: step 1/1. Functionally, catalyzes a salvage reaction resulting in the formation of IMP that is energically less costly than de novo synthesis. In Ferroglobus placidus (strain DSM 10642 / AEDII12DO), this protein is Hypoxanthine/guanine phosphoribosyltransferase.